A 289-amino-acid chain; its full sequence is Bis(5'-nucleosyl)-tetraphosphatase, symmetrical (289 aa).

This sequence belongs to the Ap4A hydrolase family.

The enzyme catalyses P(1),P(4)-bis(5'-adenosyl) tetraphosphate + H2O = 2 ADP + 2 H(+). Its function is as follows. Hydrolyzes diadenosine 5',5'''-P1,P4-tetraphosphate to yield ADP. The protein is Bis(5'-nucleosyl)-tetraphosphatase, symmetrical of Yersinia pseudotuberculosis serotype O:1b (strain IP 31758).